The sequence spans 504 residues: Maturase K (504 aa).

The protein belongs to the intron maturase 2 family. MatK subfamily.

The protein resides in the plastid. It localises to the chloroplast. Usually encoded in the trnK tRNA gene intron. Probably assists in splicing its own and other chloroplast group II introns. This chain is Maturase K, found in Arabidopsis lyrata (Lyre-leaved rock-cress).